Consider the following 309-residue polypeptide: uncharacterized protein (309 aa).

The region spanning 1–60 (MKPLLDVLMILDALEKEGSFAAASAKLYKTPSALSYTVHKLESDLNIQLLDRSGHRAKFT) is the HTH lysR-type domain. Positions 20-39 (FAAASAKLYKTPSALSYTVH) form a DNA-binding region, H-T-H motif.

Belongs to the LysR transcriptional regulatory family.

This is an uncharacterized protein from Escherichia coli (strain K12).